Consider the following 303-residue polypeptide: Methionine import ATP-binding protein MetN (303 aa).

Residues 1–222 (MLDQISLEIP…PDPKMRHFLG (222 aa)) form the ABC transporter domain. Residue 19-26 (GHSGAGKS) coordinates ATP.

This sequence belongs to the ABC transporter superfamily. Methionine importer (TC 3.A.1.24) family. As to quaternary structure, the complex is composed of two ATP-binding proteins (MetN), two transmembrane proteins (MetI) and a solute-binding protein (MetQ).

Its subcellular location is the cell inner membrane. The catalysed reaction is L-methionine(out) + ATP + H2O = L-methionine(in) + ADP + phosphate + H(+). It carries out the reaction D-methionine(out) + ATP + H2O = D-methionine(in) + ADP + phosphate + H(+). Part of the ABC transporter complex MetNIQ involved in methionine import. Responsible for energy coupling to the transport system. The polypeptide is Methionine import ATP-binding protein MetN (Wolinella succinogenes (strain ATCC 29543 / DSM 1740 / CCUG 13145 / JCM 31913 / LMG 7466 / NCTC 11488 / FDC 602W) (Vibrio succinogenes)).